The primary structure comprises 231 residues: Large ribosomal subunit protein uL1 (231 aa).

This sequence belongs to the universal ribosomal protein uL1 family. As to quaternary structure, part of the 50S ribosomal subunit.

Functionally, binds directly to 23S rRNA. The L1 stalk is quite mobile in the ribosome, and is involved in E site tRNA release. Its function is as follows. Protein L1 is also a translational repressor protein, it controls the translation of the L11 operon by binding to its mRNA. The polypeptide is Large ribosomal subunit protein uL1 (Azoarcus sp. (strain BH72)).